Reading from the N-terminus, the 265-residue chain is Undecaprenyl-diphosphatase (265 aa).

8 consecutive transmembrane segments (helical) span residues 1 to 21 (MDFI…FLPI), 39 to 61 (QGLA…YFRL), 85 to 105 (LAWA…MLTE), 115 to 135 (LIIA…DWAG), 149 to 169 (ILFI…RSGI), 187 to 207 (FSFL…ALDL), 218 to 238 (ALAL…HYFF), and 244 to 264 (IGML…FYLF).

This sequence belongs to the UppP family.

The protein resides in the cell inner membrane. It catalyses the reaction di-trans,octa-cis-undecaprenyl diphosphate + H2O = di-trans,octa-cis-undecaprenyl phosphate + phosphate + H(+). In terms of biological role, catalyzes the dephosphorylation of undecaprenyl diphosphate (UPP). Confers resistance to bacitracin. The chain is Undecaprenyl-diphosphatase from Nitrosococcus oceani (strain ATCC 19707 / BCRC 17464 / JCM 30415 / NCIMB 11848 / C-107).